Here is a 449-residue protein sequence, read N- to C-terminus: Phosphoglucosamine mutase (449 aa).

Residue S100 is the Phosphoserine intermediate of the active site. Mg(2+) is bound by residues S100, D241, D243, and D245. S100 is subject to Phosphoserine.

Belongs to the phosphohexose mutase family. It depends on Mg(2+) as a cofactor. Post-translationally, activated by phosphorylation.

The enzyme catalyses alpha-D-glucosamine 1-phosphate = D-glucosamine 6-phosphate. In terms of biological role, catalyzes the conversion of glucosamine-6-phosphate to glucosamine-1-phosphate. The chain is Phosphoglucosamine mutase from Clostridium kluyveri (strain NBRC 12016).